A 347-amino-acid chain; its full sequence is DNA damage tolerance protein RHC31 (347 aa).

The residue at position 9 (S9) is a Phosphoserine. A Glycyl lysine isopeptide (Lys-Gly) (interchain with G-Cter in SUMO) cross-link involves residue K35.

Could be involved in a ubiquitin-related process important for DNA damage tolerance. The polypeptide is DNA damage tolerance protein RHC31 (AOS1) (Saccharomyces cerevisiae (strain ATCC 204508 / S288c) (Baker's yeast)).